Reading from the N-terminus, the 1158-residue chain is Formin-C (1158 aa).

Disordered stretches follow at residues Ile8–Ser29, Pro417–Leu523, and Ile990–Gln1052. The 369-residue stretch at Gln20–Ile388 folds into the GBD/FH3 domain. Polar residues predominate over residues Pro417–Asp437. Residues Thr438–Leu481 show a composition bias toward low complexity. A coiled-coil region spans residues Leu479–Thr515. The segment covering Gln482 to Gln503 has biased composition (basic and acidic residues). The FH2 domain maps to Thr601–Asn998. A DAD domain is found at Ser1134–Phe1158.

Belongs to the formin homology family. Diaphanous subfamily. As to quaternary structure, interacts (via GBD/FH3 domain) with activated Rho-GTPases.

It is found in the cytoplasm. It localises to the cytosol. The protein localises to the cytoskeleton. In terms of biological role, formins play an important role in the nucleation of actin and the formation of linear actin filaments. The protein is Formin-C (forC) of Dictyostelium discoideum (Social amoeba).